The sequence spans 612 residues: Actin-binding LIM protein 2 (612 aa).

4 consecutive LIM zinc-binding domains span residues 22–81, 81–141, 151–210, and 210–270; these read ILCN…LYGT, TRCF…TLLG, RSCG…KFGI, and IRCD…ARTE. Zn(2+) contacts are provided by Cys83, Cys86, His103, Cys106, Cys109, Cys112, Cys131, and Cys134. The Zn(2+) site is built by Cys212, Cys215, His232, Cys235, Cys238, Cys241, His260, and Cys263. The segment covering 269-278 has biased composition (basic and acidic residues); the sequence is TEDKSKETRT. Disordered regions lie at residues 269–295 and 341–433; these read TEDK…SGSP and AVGD…DNIY. The span at 279 to 295 shows a compositional bias: low complexity; the sequence is SSESIVSVPASSTSGSP. A phosphoserine mark is found at Ser282, Ser294, Gly351, Arg356, Ser365, and Ser368. Low complexity predominate over residues 364 to 373; the sequence is SSPSSAGSVS. Polar residues predominate over residues 394–416; sequence SGRSTPSLSVHSDSRPPSSTYQQ. Ser453 is modified (phosphoserine). A disordered region spans residues 471-498; sequence ADTRTNSPDLDSQSLSLSSGTDQEPLQR. Residue Thr473 is modified to Phosphothreonine. Phosphoserine occurs at positions 477 and 579. Residues 477-489 are compositionally biased toward low complexity; the sequence is SPDLDSQSLSLSS. An HP domain is found at 544–612; the sequence is TREYKIYPYD…NDLKKKALLF (69 aa).

Interacts with F-actin and ABRA. In terms of tissue distribution, expressed in brain. Highly expressed in caudate/putamen, moderately expressed in the olfactory bulb. In the hippocampus, expressed in the CA1, CA2 and CA3 fields. In the cerebellum, expressed in Purkinje cells.

The protein localises to the cytoplasm. May act as scaffold protein. May stimulate ABRA activity and ABRA-dependent SRF transcriptional activity. This chain is Actin-binding LIM protein 2 (Ablim2), found in Mus musculus (Mouse).